Here is an 84-residue protein sequence, read N- to C-terminus: Large ribosomal subunit protein eL34 (84 aa).

Belongs to the eukaryotic ribosomal protein eL34 family.

The polypeptide is Large ribosomal subunit protein eL34 (ribL34e) (Pyrobaculum aerophilum (strain ATCC 51768 / DSM 7523 / JCM 9630 / CIP 104966 / NBRC 100827 / IM2)).